Reading from the N-terminus, the 134-residue chain is 6,7-dimethyl-8-ribityllumazine synthase (134 aa).

5-amino-6-(D-ribitylamino)uracil contacts are provided by residues Phe11, 43 to 45 (AYD), and 67 to 69 (AIV). Residue 72–73 (DT) coordinates (2S)-2-hydroxy-3-oxobutyl phosphate. His75 (proton donor) is an active-site residue. Phe100 is a binding site for 5-amino-6-(D-ribitylamino)uracil. Arg115 contacts (2S)-2-hydroxy-3-oxobutyl phosphate.

The protein belongs to the DMRL synthase family.

It catalyses the reaction (2S)-2-hydroxy-3-oxobutyl phosphate + 5-amino-6-(D-ribitylamino)uracil = 6,7-dimethyl-8-(1-D-ribityl)lumazine + phosphate + 2 H2O + H(+). It participates in cofactor biosynthesis; riboflavin biosynthesis; riboflavin from 2-hydroxy-3-oxobutyl phosphate and 5-amino-6-(D-ribitylamino)uracil: step 1/2. Functionally, catalyzes the formation of 6,7-dimethyl-8-ribityllumazine by condensation of 5-amino-6-(D-ribitylamino)uracil with 3,4-dihydroxy-2-butanone 4-phosphate. This is the penultimate step in the biosynthesis of riboflavin. The chain is 6,7-dimethyl-8-ribityllumazine synthase from Halorubrum lacusprofundi (strain ATCC 49239 / DSM 5036 / JCM 8891 / ACAM 34).